The chain runs to 813 residues: Glycerol-3-phosphate acyltransferase (813 aa).

An HXXXXD motif motif is present at residues 304–309; it reads CHRSHI.

Belongs to the GPAT/DAPAT family.

The protein localises to the cell inner membrane. It carries out the reaction sn-glycerol 3-phosphate + an acyl-CoA = a 1-acyl-sn-glycero-3-phosphate + CoA. Its pathway is phospholipid metabolism; CDP-diacylglycerol biosynthesis; CDP-diacylglycerol from sn-glycerol 3-phosphate: step 1/3. The chain is Glycerol-3-phosphate acyltransferase from Actinobacillus succinogenes (strain ATCC 55618 / DSM 22257 / CCUG 43843 / 130Z).